The sequence spans 609 residues: Mitochondrial nucleoid-associated protein 1 (609 aa).

Residues 1-552 (MSDNPPRMEV…IRCNTTIRKS (552 aa)) are Mitochondrial matrix-facing. 3 disordered regions span residues 142 to 168 (ASEK…NPSE), 183 to 202 (SNQD…TTSG), and 410 to 441 (QLSL…HTPQ). Residues 146–161 (TSPKRELAKDLPKSGE) are compositionally biased toward basic and acidic residues. Polar residues predominate over residues 418–441 (DSQFQASHTGCQSPLCSAQRHTPQ). A helical transmembrane segment spans residues 553–573 (GFGGITMLFTGYFVLCCSWSF). Residues 574 to 609 (RRLKKLCRPLPWKSTVPPCIGVAKTTGDCRSKTCLD) lie on the Mitochondrial intermembrane side of the membrane.

The protein localises to the mitochondrion inner membrane. It is found in the mitochondrion matrix. It localises to the mitochondrion nucleoid. Critical regulator of mitochondrial DNA (mtDNA) abundance. Binds dsDNA throughout the mitochondrial genome without sequence specificity and controls mtDNA copy number by promoting its replication. Also plays important roles in mitochondrial metabolism and cell proliferation. The protein is Mitochondrial nucleoid-associated protein 1 of Homo sapiens (Human).